A 172-amino-acid chain; its full sequence is Cytochrome b6-f complex iron-sulfur subunit (172 aa).

Residues 17 to 39 (VFLNALLSSSVGVVVVGTLYPVV) form a helical membrane-spanning segment. The region spanning 61–161 (GKPISVSELL…ATVDGDNVRF (101 aa)) is the Rieske domain. [2Fe-2S] cluster-binding residues include C107, H109, C125, and H128. A disulfide bridge connects residues C112 and C127.

Belongs to the Rieske iron-sulfur protein family. As to quaternary structure, the 4 large subunits of the cytochrome b6-f complex are cytochrome b6, subunit IV (17 kDa polypeptide, PetD), cytochrome f and the Rieske protein, while the 4 small subunits are PetG, PetL, PetM and PetN. The complex functions as a dimer. It depends on [2Fe-2S] cluster as a cofactor.

The protein resides in the cellular thylakoid membrane. It catalyses the reaction 2 oxidized [plastocyanin] + a plastoquinol + 2 H(+)(in) = 2 reduced [plastocyanin] + a plastoquinone + 4 H(+)(out). Its function is as follows. Component of the cytochrome b6-f complex, which mediates electron transfer between photosystem II (PSII) and photosystem I (PSI), cyclic electron flow around PSI, and state transitions. This chain is Cytochrome b6-f complex iron-sulfur subunit, found in Synechococcus sp. (strain JA-3-3Ab) (Cyanobacteria bacterium Yellowstone A-Prime).